We begin with the raw amino-acid sequence, 150 residues long: uncharacterized protein (150 aa).

A signal peptide spans methionine 1 to alanine 23.

The protein belongs to the asfivirus EP152R family.

It localises to the virion. This is an uncharacterized protein from African swine fever virus (isolate Tick/South Africa/Pretoriuskop Pr4/1996) (ASFV).